The primary structure comprises 131 residues: DVYKGGGGGRYGGGRYGGGGGYGGGLGGGGLGGGGLGGGKGLGGGGLGGGGLGGGGLGGGGLGGGKGLGGGGLGGGGLGGGGLGGGGLGGGKGLGGGGLGGGGLGGGRGGYGGGGYGGGYGGGYGGGKYKG.

Lysine 130 is modified (lysine amide).

Expressed in hemocytes and secreted into the plasma following bacterial immune challenge.

The protein localises to the secreted. In terms of biological role, antimicrobial protein. Strong activity against the Gram-negative bacterium E.coli SBS363 and yeast C.albicans. No detectable activity against the Gram-positive bacterium M.luteus. The sequence is that of Acanthoscurrin-2 from Acanthoscurria gomesiana (Tarantula spider).